A 572-amino-acid polypeptide reads, in one-letter code: 2-hydroxyacyl-CoA lyase (572 aa).

At A2 the chain carries N-acetylalanine. Residue E58 participates in thiamine diphosphate binding. A thiamine pyrophosphate binding region spans residues 407-488 (TMDVGRSVLV…IIVFNNGGVY (82 aa)). Positions 457 and 484 each coordinate Mg(2+).

The protein belongs to the TPP enzyme family. In terms of assembly, homotetramer. Mg(2+) is required as a cofactor. Requires thiamine diphosphate as cofactor.

It carries out the reaction an (R)-2-hydroxy-long-chain-fatty acyl-CoA = a long-chain fatty aldehyde + formyl-CoA. It catalyses the reaction a 2-hydroxy-3-methyl fatty acyl-CoA = a 2-methyl-branched fatty aldehyde + formyl-CoA. Functionally, catalyzes a carbon-carbon cleavage reaction; cleaves a 2-hydroxy-3-methylacyl-CoA into formyl-CoA and a 2-methyl-branched fatty aldehyde. The chain is 2-hydroxyacyl-CoA lyase (HACL) from Arabidopsis thaliana (Mouse-ear cress).